A 429-amino-acid chain; its full sequence is Glucose-6-phosphate isomerase (429 aa).

E282 serves as the catalytic Proton donor. Residues H303 and K418 contribute to the active site.

This sequence belongs to the GPI family.

The protein localises to the cytoplasm. It carries out the reaction alpha-D-glucose 6-phosphate = beta-D-fructose 6-phosphate. It functions in the pathway carbohydrate biosynthesis; gluconeogenesis. It participates in carbohydrate degradation; glycolysis; D-glyceraldehyde 3-phosphate and glycerone phosphate from D-glucose: step 2/4. Catalyzes the reversible isomerization of glucose-6-phosphate to fructose-6-phosphate. The sequence is that of Glucose-6-phosphate isomerase from Mesomycoplasma hyopneumoniae (strain 7448) (Mycoplasma hyopneumoniae).